A 317-amino-acid polypeptide reads, in one-letter code: Osteopontin (317 aa).

The signal sequence occupies residues 1–16 (MRLAVVCFCLFGLASC). A phosphoserine mark is found at S26, S27, S60, S62, and S63. Residues 43-297 (WLKPDPSQKQ…LVLDPKSKED (255 aa)) are disordered. Residues 49–63 (SQKQNLLAPQNSVSS) show a composition bias toward polar residues. Position 66 is a phosphothreonine (T66). 8 positions are modified to phosphoserine: S76, S78, S81, S106, S109, S112, S115, and S118. Over residues 86–110 (DDDDDDDDDGDHAESEDSVNSDESD) the composition is skewed to acidic residues. T123, T132, and T137 each carry an O-linked (GalNAc...) threonine glycan. The Cell attachment site signature appears at 144-146 (RGD). Phosphothreonine is present on residues T170 and T175. Over residues 174 to 187 (LTSRMKSQESDEAI) the composition is skewed to basic and acidic residues. A phosphoserine mark is found at S176, S180, S200, S204, S209, S213, and S219. The span at 197 to 216 (SVPSDQDSNGKTSHESSQLD) shows a compositional bias: polar residues. S219 carries an O-linked (Xyl...) (chondroitin sulfate) serine glycan. Position 222 is a phosphothreonine (T222). 2 stretches are compositionally biased toward basic and acidic residues: residues 223 to 240 (HSLE…HEST) and 248 to 263 (SAEK…RSDA). Phosphoserine occurs at positions 224, 228, 257, 261, 266, 270, 273, 278, 283, 294, 306, 311, 313, and 314. Residues 273–297 (SLEHQSHEFHSHEDKLVLDPKSKED) show a composition bias toward basic and acidic residues. O-linked (Xyl...) (chondroitin sulfate) serine glycosylation is present at S311.

Belongs to the osteopontin family. In terms of assembly, interacts (via N-terminus) with integrin ITGA9:ITGB1. In terms of processing, extensively phosphorylated by FAM20C in the extracellular medium at multiple sites within the S-x-E/pS motif. The phosphorylated form inhibits hydroxyapatite crystallization. Dephosphorylation via a mechanism involving ALPL/TNAP promotes hydroxyapatite crystallization. Post-translationally, O-glycosylated. Forms covalent cross-links mediated by transglutaminase TGM2, between a glutamine and the epsilon-amino group of a lysine residue, forming homopolymers and heteropolymers, increasing its collagen binding properties.

The protein localises to the secreted. Its function is as follows. Major non-collagenous bone protein that binds tightly to hydroxyapatite. Appears to form an integral part of the mineralized matrix. Probably important to cell-matrix interaction. Acts as a cytokine involved in enhancing production of interferon-gamma and interleukin-12 and reducing production of interleukin-10 and is essential in the pathway that leads to type I immunity. This chain is Osteopontin (Spp1), found in Rattus norvegicus (Rat).